The following is a 240-amino-acid chain: Endonuclease NBR9 (240 aa).

The interval 1–24 is disordered; the sequence is MKGTGGVVVGTQNPVRDYNHSTDE. A Smr domain is found at 97 to 173; the sequence is IDLHGLYVKE…NSGVLVLELQ (77 aa). The disordered stretch occupies residues 181-219; the sequence is GPAVNAPTNQYNAQPHPQYNNNGGQPQGQAQNYNNSGND. A compositionally biased stretch (low complexity) spans 194–215; sequence QPHPQYNNNGGQPQGQAQNYNN.

It is found in the cytoplasm. Endonuclease involved in nonstop mRNA decay via the formation of mRNA cleavage fragments in the vicinity of stalled ribosomes. The sequence is that of Endonuclease NBR9 from Saccharomyces cerevisiae (strain ATCC 204508 / S288c) (Baker's yeast).